A 490-amino-acid polypeptide reads, in one-letter code: O-acetyltransferase PaAT-2 (490 aa).

The Proton acceptor role is filled by histidine 165.

Belongs to the plant acyltransferase family.

It participates in mycotoxin biosynthesis. Functionally, O-acetyltransferase; part of the 2 gene clusters that mediate the biosynthesis of fusicoccins, diterpene glucosides that display phytohormone-like activity and function as potent activators of plasma membrane H(+)-ATPases in plants by modifying 14-3-3 proteins and cause the plant disease constriction canker. The first step in the pathway is performed by the fusicoccadiene synthase PaFS that possesses both prenyl transferase and terpene cyclase activity, converting isopentenyl diphosphate and dimethylallyl diphosphate into geranylgeranyl diphosphate (GGDP) and successively converting GGDP into fusicocca-2,10(14)-diene, a precursor for fusicoccin H. The second step is the oxidation at the C-8 position by the cytochrome P450 monooxygenase PaP450-2 to yield fusicocca-2,10(14)-diene-8-beta-ol. The cytochrome P450 monooxygenase PaP450-1 then catalyzes the hydroxylation at the C-16 position to produce fusicocca-2,10(14)-diene-8-beta,16-diol. The dioxygenase fc-dox then catalyzes the 16-oxydation of fusicocca-2,10(14)-diene-8-beta,16-diol to yield an aldehyde (8-beta-hydroxyfusicocca-1,10(14)-dien-16-al). The short-chain dehydrogenase/reductase fc-sdr catalyzes the reduction of the aldehyde to yield fusicocca-1,10(14)-diene-8-beta,16-diol. The next step is the hydroxylation at C-9 performed by the cytochrome P450 monooxygenase PaP450-3 that leads to fusicoccin H aglycon which is glycosylated to fusicoccin H by the O-glycosyltransferase PaGT. Hydroxylation at C-12 by the cytochrome P450 monooxygenase PaP450-4 leads then to the production of fusicoccin Q and is followed by methylation by the O-methyltransferase PaMT to yield fusicoccin P. Fusicoccin P is further converted to fusicoccin J via prenylation by the O-glucose prenyltransferase PaPT. Cytochrome P450 monooxygenase PaP450-5 then performs hydroxylation at C-19 to yield dideacetyl-fusicoccin A which is acetylated to 3'-O-deacetyl-fusicoccin A by the O-acetyltransferase PaAT-2. Finally, a another acetylation by the O-acetyltransferase PaAT-1 yields fusicoccin A. This is O-acetyltransferase PaAT-2 from Phomopsis amygdali (Fusicoccum amygdali).